The sequence spans 132 residues: Small ribosomal subunit protein uS8 (132 aa).

Belongs to the universal ribosomal protein uS8 family. As to quaternary structure, part of the 30S ribosomal subunit. Contacts proteins S5 and S12.

Functionally, one of the primary rRNA binding proteins, it binds directly to 16S rRNA central domain where it helps coordinate assembly of the platform of the 30S subunit. This chain is Small ribosomal subunit protein uS8, found in Bacillus anthracis (strain A0248).